The primary structure comprises 206 residues: Small ribosomal subunit protein uS4A (206 aa).

The S4 RNA-binding domain maps to 98 to 164; sequence MRLDNVVYRL…EKFKTFAENP (67 aa).

The protein belongs to the universal ribosomal protein uS4 family. In terms of assembly, part of the 30S ribosomal subunit. Contacts protein S5. The interaction surface between S4 and S5 is involved in control of translational fidelity.

In terms of biological role, one of the primary rRNA binding proteins, it binds directly to 16S rRNA where it nucleates assembly of the body of the 30S subunit. Its function is as follows. With S5 and S12 plays an important role in translational accuracy. This is Small ribosomal subunit protein uS4A from Clostridium botulinum (strain ATCC 19397 / Type A).